We begin with the raw amino-acid sequence, 558 residues long: uncharacterized protein (558 aa).

The span at 338–354 shows a compositional bias: low complexity; the sequence is STSTSTSTSTSSSNDLN. The tract at residues 338–380 is disordered; the sequence is STSTSTSTSTSSSNDLNLDSDSDDSDSDDSDSDSDSDSDSEID. A compositionally biased stretch (acidic residues) spans 355–380; the sequence is LDSDSDDSDSDDSDSDSDSDSDSEID.

Its subcellular location is the plastid. This is an uncharacterized protein from Euglena longa (Euglenophycean alga).